The following is a 262-amino-acid chain: Acyl-coenzyme A diphosphatase FITM2 (262 aa).

Residues 1-23 (MEHLERCAWFLRGTLVRATVRRH) are Cytoplasmic-facing. A helical transmembrane segment spans residues 24 to 44 (LPWALVAAMLAGSVVKELSPL). At 45-57 (PESYLSNKRNVLN) the chain is on the lumenal side. A helical membrane pass occupies residues 58–78 (VYFVKLAWAWTVCLLLPFIAL). At 79-93 (TNYHLTGKTSLVLRR) the chain is on the cytoplasmic side. A helical membrane pass occupies residues 94–114 (LSTLLVGTAIWYICTALFSNI). Topologically, residues 115–145 (EHYTGSCYQSPALEGIRQEHRSKQQCHREGG) are lumenal. The chain crosses the membrane as a helical span at residues 146–166 (FWHGFDISGHSFLLTFCALMI). The active site involves histidine 155. The Cytoplasmic portion of the chain corresponds to 167-190 (VEEMAVLHEVKTDRGHHLHAAITT). A helical membrane pass occupies residues 191–211 (LVVALGFLTFIWVWMFLCTAV). Residues 212–218 (YFHDLTQ) are Lumenal-facing. Histidine 214 is a catalytic residue. Residues 219 to 239 (KVFGTMFGLLGWYGTYGYWYL) traverse the membrane as a helical segment. At 240–262 (KSFSPGLPPQSCSLTLKRDTYKK) the chain is on the cytoplasmic side.

Belongs to the FIT family. In terms of tissue distribution, widely expressed, with highest levels in white and brown adipose tissues (at protein level). In the heart, mRNA expression levels do not correlate well with protein levels, suggesting post-transcriptional regulation in this organ.

It is found in the endoplasmic reticulum membrane. It catalyses the reaction an acyl-CoA + H2O = an acyl-4'-phosphopantetheine + adenosine 3',5'-bisphosphate + 2 H(+). The enzyme catalyses (9Z)-octadecenoyl-CoA + H2O = S-(9Z-octadecenoyl)-4'-phosphopantetheine + adenosine 3',5'-bisphosphate + 2 H(+). It carries out the reaction (5Z,8Z,11Z,14Z)-eicosatetraenoyl-CoA + H2O = S-(5Z,8Z,11Z,14Z-eicosatetraenoyl)-4'-phosphopantetheine + adenosine 3',5'-bisphosphate + 2 H(+). The catalysed reaction is hexadecanoyl-CoA + H2O = S-hexadecanoyl-4'-phosphopantetheine + adenosine 3',5'-bisphosphate + 2 H(+). Functionally, fatty acyl-coenzyme A (CoA) diphosphatase that hydrolyzes fatty acyl-CoA to yield acyl-4'-phosphopantetheine and adenosine 3',5'-bisphosphate. Preferentially hydrolyzes unsaturated long-chain acyl-CoA substrates such as oleoyl-CoA/(9Z)-octadecenoyl-CoA and arachidonoyl-CoA/(5Z,8Z,11Z,14Z)-eicosatetraenoyl-CoA in the endoplasmic reticulum (ER) lumen. This catalytic activity is required for maintaining ER structure and for lipid droplets (LDs) biogenesis, which are lipid storage organelles involved in maintaining lipid and energy homeostasis. Directly binds to diacylglycerol (DAGs) and triacylglycerol, which is also important for LD biogenesis. May support directional budding of nacent LDs from the ER into the cytosol by reducing DAG levels at sites of LD formation. Plays a role in the regulation of cell morphology and cytoskeletal organization. This Mus musculus (Mouse) protein is Acyl-coenzyme A diphosphatase FITM2.